The sequence spans 353 residues: tRNA N6-adenosine threonylcarbamoyltransferase (353 aa).

2 residues coordinate Fe cation: His-119 and His-123. Substrate-binding positions include 145 to 149, Asp-178, Gly-191, and Asn-285; that span reads LVSGG. Residue Asp-313 coordinates Fe cation.

This sequence belongs to the KAE1 / TsaD family. The cofactor is Fe(2+).

Its subcellular location is the cytoplasm. It carries out the reaction L-threonylcarbamoyladenylate + adenosine(37) in tRNA = N(6)-L-threonylcarbamoyladenosine(37) in tRNA + AMP + H(+). Its function is as follows. Required for the formation of a threonylcarbamoyl group on adenosine at position 37 (t(6)A37) in tRNAs that read codons beginning with adenine. Is involved in the transfer of the threonylcarbamoyl moiety of threonylcarbamoyl-AMP (TC-AMP) to the N6 group of A37, together with TsaE and TsaB. TsaD likely plays a direct catalytic role in this reaction. This chain is tRNA N6-adenosine threonylcarbamoyltransferase, found in Magnetococcus marinus (strain ATCC BAA-1437 / JCM 17883 / MC-1).